A 98-amino-acid chain; its full sequence is uncharacterized protein (98 aa).

It belongs to the HesB/IscA family.

This is an uncharacterized protein from Staphylococcus saprophyticus subsp. saprophyticus (strain ATCC 15305 / DSM 20229 / NCIMB 8711 / NCTC 7292 / S-41).